We begin with the raw amino-acid sequence, 467 residues long: Argininosuccinate lyase (467 aa).

The protein belongs to the lyase 1 family. Argininosuccinate lyase subfamily.

It is found in the cytoplasm. The enzyme catalyses 2-(N(omega)-L-arginino)succinate = fumarate + L-arginine. The protein operates within amino-acid biosynthesis; L-arginine biosynthesis; L-arginine from L-ornithine and carbamoyl phosphate: step 3/3. This chain is Argininosuccinate lyase, found in Rhizobium etli (strain ATCC 51251 / DSM 11541 / JCM 21823 / NBRC 15573 / CFN 42).